Reading from the N-terminus, the 942-residue chain is NBPF family member NBPF8 (942 aa).

Residues 89 to 130 (AEELRQYKVLVHSQERELTQLKEKLQEGRDASRSLNEHLQAL) adopt a coiled-coil conformation. The tract at residues 161-203 (KLSPENDEDEDEDVQVEEDEKVQKSSAPREVQKAEESKVPEDS) is disordered. The span at 165–180 (ENDEDEDEDVQVEEDE) shows a compositional bias: acidic residues. One can recognise an Olduvai 1 domain in the interval 165 to 259 (ENDEDEDEDV…ECQDALNILS (95 aa)). Residues 190–201 (EVQKAEESKVPE) show a composition bias toward basic and acidic residues. A coiled-coil region spans residues 339–401 (KSMLRNERQF…LSLNEHLQAL (63 aa)). Olduvai domains follow at residues 436–528 (ENDN…HIIP), 529–617 (ENES…ATGP), 620–675 (SREL…VDMD), 676–767 (EIEK…PPCP), 770–843 (SREL…RSKK), and 844–904 (KRRR…RSVF). Disordered regions lie at residues 451 to 474 (EKVQ…PEDS) and 528 to 566 (PENE…EGYS). 2 stretches are compositionally biased toward acidic residues: residues 530 to 539 (NESDDEEEEE) and 550 to 562 (ESEE…ESWD). Positions 831 to 849 (GKGKIRRGRRSKKKRRRGR) are enriched in basic residues. Residues 831 to 863 (GKGKIRRGRRSKKKRRRGRKEGEEDQNPPCPRL) form a disordered region.

This sequence belongs to the NBPF family. As to expression, expressed in the mammary gland.

It localises to the cytoplasm. The polypeptide is NBPF family member NBPF8 (Homo sapiens (Human)).